The chain runs to 585 residues: Glutamate decarboxylase 2 (585 aa).

Positions 1-24 are disordered; the sequence is MASPGSGFWSFGSEDGSGDPENSG. Phosphoserine is present on residues S3, S6, S10, and S13. Residues C30 and C45 are each lipidated (S-palmitoyl cysteine). Residue 181–183 coordinates substrate; sequence QLS. Residue K396 is modified to N6-(pyridoxal phosphate)lysine. A substrate-binding site is contributed by R558.

The protein belongs to the group II decarboxylase family. In terms of assembly, homodimer. The cofactor is pyridoxal 5'-phosphate. Phosphorylated; which does not affect kinetic parameters or subcellular location. Post-translationally, palmitoylated; which is required for presynaptic clustering.

It localises to the cytoplasm. It is found in the cytosol. The protein localises to the cytoplasmic vesicle. The protein resides in the presynaptic cell membrane. Its subcellular location is the golgi apparatus membrane. It catalyses the reaction L-glutamate + H(+) = 4-aminobutanoate + CO2. In terms of biological role, catalyzes the production of GABA. The sequence is that of Glutamate decarboxylase 2 (GAD2) from Sus scrofa (Pig).